Here is a 292-residue protein sequence, read N- to C-terminus: MLSAALAFNSYALDITHEMGTTSFETTPKKVVALDWVLTETVLSLGIELEGAANISGYQQWVAEPHLNADAIDVGSRREPNLELLSNIKPDVILISKHLAAAYEPLSKIAPVLVYSVYSEDKQPLESAKRITRSLGKLFDKEQQAEQVIAQTDQRLAANGAKITSAGKAEKPLLFARFINDKTLRIHSEGSLAQDTINAMGLKNDWQEPTNLWGFTTTGTEKLAEHQKANVMIFGPLSQEERQQLTQSPLWQAMEFSRTDSVYELPAIWTFGGLLAAQRLSDHITGRLTQPQ.

The N-terminal stretch at 1–12 (MLSAALAFNSYA) is a signal peptide. Residues 30-292 (KVVALDWVLT…HITGRLTQPQ (263 aa)) enclose the Fe/B12 periplasmic-binding domain. Desferrioxamine B is bound by residues W61, R77, Y118, R185, W213, F215, W269, and F271.

The protein belongs to the bacterial solute-binding protein 8 family. In terms of assembly, the complex is composed of two ATP-binding proteins (VatC), two transmembrane proteins (VatB) and a solute-binding protein (VatD).

It localises to the periplasm. In terms of biological role, part of the ABC transporter complex VatCDB involved in the import of iron(3+)-complexed aerobactin, a citrate-hydroxamate siderophore produced by other bacteria. Binds the iron(3+)-aerobactin complex and transfers it to the membrane-bound permease. Functions in the import of iron(3+)-complexed vulnibactin, a catecholate siderophore synthesized by V.vulnificus, in the absence of FatB. The protein is Ferric aerobactin-binding protein VatD of Vibrio vulnificus.